Consider the following 260-residue polypeptide: Thiazole synthase (260 aa).

Lysine 96 (schiff-base intermediate with DXP) is an active-site residue. 1-deoxy-D-xylulose 5-phosphate is bound by residues glycine 157, 184–185 (AG), and 206–207 (NT).

The protein belongs to the ThiG family. Homotetramer. Forms heterodimers with either ThiH or ThiS.

Its subcellular location is the cytoplasm. The catalysed reaction is [ThiS sulfur-carrier protein]-C-terminal-Gly-aminoethanethioate + 2-iminoacetate + 1-deoxy-D-xylulose 5-phosphate = [ThiS sulfur-carrier protein]-C-terminal Gly-Gly + 2-[(2R,5Z)-2-carboxy-4-methylthiazol-5(2H)-ylidene]ethyl phosphate + 2 H2O + H(+). It functions in the pathway cofactor biosynthesis; thiamine diphosphate biosynthesis. Catalyzes the rearrangement of 1-deoxy-D-xylulose 5-phosphate (DXP) to produce the thiazole phosphate moiety of thiamine. Sulfur is provided by the thiocarboxylate moiety of the carrier protein ThiS. In vitro, sulfur can be provided by H(2)S. In Nitrobacter hamburgensis (strain DSM 10229 / NCIMB 13809 / X14), this protein is Thiazole synthase.